A 263-amino-acid chain; its full sequence is Ribosomal RNA large subunit methyltransferase E (263 aa).

Residues G48, W50, D68, D88, and D118 each contribute to the S-adenosyl-L-methionine site. K158 functions as the Proton acceptor in the catalytic mechanism. Residues 205–263 (PVREGDIVEATIEDIGEEGDGIAKVENFTVFVSGVEDGETVEVRIDDVKPRYAFAEPVE) enclose the TRAM domain.

The protein belongs to the class I-like SAM-binding methyltransferase superfamily. RNA methyltransferase RlmE family.

The protein localises to the cytoplasm. The catalysed reaction is uridine(2552) in 23S rRNA + S-adenosyl-L-methionine = 2'-O-methyluridine(2552) in 23S rRNA + S-adenosyl-L-homocysteine + H(+). Specifically methylates the uridine in position 2552 of 23S rRNA at the 2'-O position of the ribose in the fully assembled 50S ribosomal subunit. The protein is Ribosomal RNA large subunit methyltransferase E of Haloarcula marismortui (strain ATCC 43049 / DSM 3752 / JCM 8966 / VKM B-1809) (Halobacterium marismortui).